The chain runs to 547 residues: Apicoplast pyruvate carrier 1 (547 aa).

The interval 1–33 (MEPRAPPRLSVSSPRRESGATVPSHSPSTLLSC) is disordered. Residues 1–45 (MEPRAPPRLSVSSPRRESGATVPSHSPSTLLSCASSETATEKRRR) lie on the Cytoplasmic side of the membrane. Polar residues predominate over residues 21-33 (TVPSHSPSTLLSC). A run of 12 helical transmembrane segments spans residues 46-66 (WTGV…GTVY), 126-146 (AWVL…GGIA), 167-187 (VGMA…FGVI), 189-209 (GVGL…WFPE), 212-232 (GIVS…FSPL), 278-298 (LLAV…RVPA), 345-365 (ALVS…GLAI), 385-405 (ILTE…NAVG), 417-437 (GFQT…FFLP), 445-465 (LCYA…FSVF), 467-487 (SAVA…FIFG), and 515-535 (LMGL…ALSP).

It belongs to the major facilitator superfamily. Interacts with apicoplast pyruvate carrier 2.

It localises to the plastid. The protein localises to the apicoplast. It is found in the membrane. Along with apicoplast pyruvate carrier 2, forms apicoplast pyruvate carrier (APC) complex, which transports pyruvate into the apicoplast and may also transport amino acids like methionine, serine, glycine and tryptophan with low efficiency. Required for maintaining pyruvate-dependent metabolic activities in the apicoplast, such as synthesis of fatty acids, isopentenyl pyrophosphate (IPP), dimethylallyl pyrophosphate (DMAPP) and methylerythritol 4-phosphate (MEP). Required for maintaining the integrity of the apicoplast. Required for normal parasite growth. The protein is Apicoplast pyruvate carrier 1 of Toxoplasma gondii.